A 129-amino-acid chain; its full sequence is Large ribosomal subunit protein uL22 (129 aa).

This sequence belongs to the universal ribosomal protein uL22 family. As to quaternary structure, part of the 50S ribosomal subunit.

Its function is as follows. This protein binds specifically to 23S rRNA; its binding is stimulated by other ribosomal proteins, e.g. L4, L17, and L20. It is important during the early stages of 50S assembly. It makes multiple contacts with different domains of the 23S rRNA in the assembled 50S subunit and ribosome. In terms of biological role, the globular domain of the protein is located near the polypeptide exit tunnel on the outside of the subunit, while an extended beta-hairpin is found that lines the wall of the exit tunnel in the center of the 70S ribosome. The sequence is that of Large ribosomal subunit protein uL22 from Brucella abortus (strain 2308).